The sequence spans 168 residues: Photosystem I assembly protein Ycf3 (168 aa).

TPR repeat units lie at residues 35–68 (AFTY…EIDP), 72–105 (SYIL…NPFL), and 120–153 (GEQA…TPGN).

The protein belongs to the Ycf3 family.

The protein resides in the plastid. Its subcellular location is the chloroplast thylakoid membrane. Functionally, essential for the assembly of the photosystem I (PSI) complex. May act as a chaperone-like factor to guide the assembly of the PSI subunits. The polypeptide is Photosystem I assembly protein Ycf3 (Phalaenopsis aphrodite subsp. formosana (Moth orchid)).